A 214-amino-acid chain; its full sequence is Adenylate kinase (214 aa).

10-15 (GAGKGT) is an ATP binding site. The interval 30-59 (STGDMLRAAIKAGTELGLKAKAVMDAGQLV) is NMP. Residues T31, R36, 57–59 (QLV), 85–88 (GFPR), and Q92 each bind AMP. Positions 122-159 (GRRVHSGSGRTYHVVFNPPKVEGKDDVTGEDLVIRADD) are LID. Residues R123 and 132–133 (TY) contribute to the ATP site. AMP is bound by residues R156 and R167. Residue Q200 coordinates ATP.

This sequence belongs to the adenylate kinase family. Monomer.

The protein resides in the cytoplasm. The catalysed reaction is AMP + ATP = 2 ADP. The protein operates within purine metabolism; AMP biosynthesis via salvage pathway; AMP from ADP: step 1/1. In terms of biological role, catalyzes the reversible transfer of the terminal phosphate group between ATP and AMP. Plays an important role in cellular energy homeostasis and in adenine nucleotide metabolism. The chain is Adenylate kinase from Aeromonas hydrophila subsp. hydrophila (strain ATCC 7966 / DSM 30187 / BCRC 13018 / CCUG 14551 / JCM 1027 / KCTC 2358 / NCIMB 9240 / NCTC 8049).